A 606-amino-acid polypeptide reads, in one-letter code: CDPK-related kinase 8 (606 aa).

Positions 1 to 14 (MGGCTSKPSTSSGR) are enriched in polar residues. Positions 1–132 (MGGCTSKPST…TEVPQREEEE (132 aa)) are disordered. Residue glycine 2 is the site of N-myristoyl glycine attachment. The span at 98–110 (KHIRAALRRRKGK) shows a compositional bias: basic residues. The region spanning 150 to 412 (VELGEEIGRG…ASQALMHPWI (263 aa)) is the Protein kinase domain. ATP-binding positions include 156–164 (IGRGHFGYT) and lysine 182. Residue aspartate 278 is the Proton acceptor of the active site. Serine 318 is modified (phosphoserine). An autoinhibitory domain region spans residues 418–448 (DMNIPFDILIFRQMKAYLRSSSLRKAALRAL). Positions 437-457 (SSSLRKAALRALSKTLIKDEI) are calmodulin binding (CaMBD). EF-hand domains follow at residues 455–491 (DEILYLKTQFSLLAPNKDGLITMDTIRMALASNATEA), 492–527 (MKESRIPEFLALLNGLQYRGMDFEEFCAAAINVHQH), 528–567 (ESLDCWEQSIRHAYELFDKNGNRAIVIEELASELGVGPSI), and 570–599 (HSVLHDWIRHTDGKLSFFGFVKLLHGVSVR). Ca(2+)-binding residues include asparagine 470, aspartate 472, glutamate 516, aspartate 545, asparagine 547, asparagine 549, glutamate 556, aspartate 581, and lysine 583. Serine 585 is subject to Phosphoserine.

Belongs to the protein kinase superfamily. Ser/Thr protein kinase family. CDPK subfamily. In terms of assembly, binds calmodulin (CaM) in a calcium-dependent manner. In terms of processing, autophosphorylated.

Its subcellular location is the membrane. It carries out the reaction L-seryl-[protein] + ATP = O-phospho-L-seryl-[protein] + ADP + H(+). The catalysed reaction is L-threonyl-[protein] + ATP = O-phospho-L-threonyl-[protein] + ADP + H(+). Activated by calcium and calmodulin. Autophosphorylation may play an important role in the regulation of the kinase activity. May play a role in signal transduction pathways that involve calcium as a second messenger. The protein is CDPK-related kinase 8 (CRK8) of Arabidopsis thaliana (Mouse-ear cress).